We begin with the raw amino-acid sequence, 653 residues long: MATGANATPLDFPSKKRKRSRWNQDTMEQKTVIPGMPTVIPPGLTREQERAYIVQLQIEDLTRKLRTGDLGIPPNPEDRSPSPEPIYNSEGKRLNTREFRTRKKLEEERHTLITEMVALNPDFKPPADYKPPATRVSDKVMIPQDEYPEINFVGLLIGPRGNTLKNIEKECNAKIMIRGKGSVKEGKVGRKDGQMLPGEDEPLHALVTANTMENVKKAVEQIRNILKQGIETPEDQNDLRKMQLRELARLNGTLREDDNRILRPWQSSETRSITNTTVCTKCGGAGHIASDCKFQRPGDPQSAQDKARMDKEYLSLMAELGEAPVPASVGSTSGPATTPLASAPRPAAPASNPPPPSLMSTTQSRPPWMNSGPSENRPYHGMHGGGPGGPGGGPHSFPHPLPSLTGGHGGHPMQHNPNGPPPPWMQPPPPPMNQGPHPPGHHGPPPMDQYLGSTPVGSGVYRLHQGKGMMPPPPMGMMPPPPPPPSGQPPPPPSGPLPPWQQQQQQPPPPPPPSSSMASSTPLPWQQNTTTTTTSAGTGSIPPWQQQQAAAAASPGTPQMQGNPTMVPLPPGVQPPLPPGAPPPPPCSIECLLCLLSSPNSLCLSPNRAARIPPRGSDGPSHESEDFPRPLVTLPGRQPQQRPWWTGWFGKAA.

Disordered regions lie at residues 1–44 (MATG…PPGL) and 65–94 (LRTGDLGIPPNPEDRSPSPEPIYNSEGKRL). An N-acetylalanine modification is found at Ala-2. A Phosphoserine modification is found at Ser-14. The Nuclear localization signal motif lies at 15–19 (KKRKR). Ser-20 is modified (phosphoserine; by PKG). A phosphoserine mark is found at Ser-80 and Ser-82. Residue Tyr-87 is modified to Phosphotyrosine. The residue at position 89 (Ser-89) is a Phosphoserine. The KH domain maps to 141-222 (MIPQDEYPEI…ENVKKAVEQI (82 aa)). The CCHC-type zinc-finger motif lies at 277–296 (TVCTKCGGAGHIASDCKFQR). 2 disordered regions span residues 325 to 584 (VPAS…APPP) and 611 to 653 (RIPP…GKAA). Low complexity predominate over residues 335–350 (PATTPLASAPRPAAPA). Gly residues predominate over residues 382 to 394 (MHGGGPGGPGGGP). Pro residues-rich tracts occupy residues 418 to 447 (NGPPPPWMQPPPPPMNQGPHPPGHHGPPPM) and 470 to 499 (MPPPPMGMMPPPPPPPSGQPPPPPSGPLPP). A compositionally biased stretch (low complexity) spans 515–534 (SSMASSTPLPWQQNTTTTTT). Over residues 567–584 (VPLPPGVQPPLPPGAPPP) the composition is skewed to pro residues.

It belongs to the BBP/SF1 family. As to quaternary structure, binds U2AF2. Interacts with U1 snRNA. Interacts with RBM17. Binds EWSR1, FUS and TAF15. Post-translationally, phosphorylation on Ser-20 interferes with U2AF2 binding and spliceosome assembly. In terms of tissue distribution, detected at intermediate levels in spleen. Lower levels in heart, kidney, brain, liver, testis, bone marrow, adrenal gland, lymph nodes, pancreas and thymus.

Its subcellular location is the nucleus. In terms of biological role, necessary for the ATP-dependent first step of spliceosome assembly. Binds to the intron branch point sequence (BPS) 5'-UACUAAC-3' of the pre-mRNA. May act as transcription repressor. The chain is Splicing factor 1 (Sf1) from Mus musculus (Mouse).